Reading from the N-terminus, the 516-residue chain is L-amino-acid oxidase (516 aa).

Residues 1-18 (MNVFFMFSLLFLAALGSC) form the signal peptide. Cys28 and Cys189 are joined by a disulfide. Residues 61 to 62 (MS), 81 to 82 (EA), Arg89, and 103 to 106 (GPMR) each bind FAD. Positions 106 and 239 each coordinate substrate. An FAD-binding site is contributed by Val279. A disulfide bridge connects residues Cys349 and Cys430. N-linked (GlcNAc...) asparagine glycosylation is present at Asn379. Tyr390 lines the substrate pocket. FAD contacts are provided by residues Glu475 and 482-487 (GWIDST). 482 to 483 (GW) provides a ligand contact to substrate.

Belongs to the flavin monoamine oxidase family. FIG1 subfamily. In terms of assembly, homodimer; non-covalently linked. Requires FAD as cofactor. N-glycosylated. As to expression, expressed by the venom gland.

It localises to the secreted. The catalysed reaction is an L-alpha-amino acid + O2 + H2O = a 2-oxocarboxylate + H2O2 + NH4(+). In terms of biological role, catalyzes an oxidative deamination of predominantly hydrophobic and aromatic L-amino acids, thus producing hydrogen peroxide that may contribute to the diverse toxic effects of this enzyme. Exhibits diverse biological activities, such as hemorrhage, hemolysis, edema, apoptosis of vascular endothelial cells or tumor cell lines, antibacterial and antiparasitic activities, as well as regulation of platelet aggregation. Effects of snake L-amino oxidases on platelets are controversial, since they either induce aggregation or inhibit agonist-induced aggregation. These different effects are probably due to different experimental conditions. The protein is L-amino-acid oxidase of Sistrurus catenatus edwardsii (Desert massasauga).